The chain runs to 207 residues: uncharacterized protein (207 aa).

2 disordered regions span residues 1–81 and 140–169; these read MNPT…GNTR and TSQS…PPKK. Residues 21–40 are compositionally biased toward polar residues; the sequence is FEQTNSSASLTQKNSSSETE. Residues 58–70 are compositionally biased toward basic residues; the sequence is PTKRGSGRGRGRS. Polar residues predominate over residues 140–152; sequence TSQSIDAQPTPSQ. The span at 156–165 shows a compositional bias: basic and acidic residues; sequence AHHEPHEKRG.

The protein localises to the nucleus. Its subcellular location is the nucleolus. This is an uncharacterized protein from Schizosaccharomyces pombe (strain 972 / ATCC 24843) (Fission yeast).